The chain runs to 424 residues: Histone-binding protein RBBP7 (424 aa).

WD repeat units follow at residues Gln-47 to His-121, Arg-127 to Arg-172, Gly-180 to Asp-216, Val-227 to Asp-268, Val-274 to Phe-311, Glu-317 to His-368, and Ile-375 to Met-402. The interval Asp-359 to Glu-404 is interaction with HAT1.

Belongs to the WD repeat RBAP46/RBAP48/MSI1 family. In terms of assembly, binds directly to helix 1 of the histone fold of histone H4, a region that is not accessible when H4 is in chromatin. Also interacts with histone H2B and HAT1.

The protein localises to the nucleus. Its function is as follows. Core histone-binding subunit that may target chromatin remodeling factors, histone acetyltransferases and histone deacetylases to their histone substrates in a manner that is regulated by nucleosomal DNA. Component of several complexes which regulate chromatin metabolism. In Gallus gallus (Chicken), this protein is Histone-binding protein RBBP7 (RBBP7).